Consider the following 461-residue polypeptide: ATP synthase subunit beta (461 aa).

151-158 (GGAGVGKT) is a binding site for ATP.

Belongs to the ATPase alpha/beta chains family. As to quaternary structure, F-type ATPases have 2 components, CF(1) - the catalytic core - and CF(0) - the membrane proton channel. CF(1) has five subunits: alpha(3), beta(3), gamma(1), delta(1), epsilon(1). CF(0) has three main subunits: a(1), b(2) and c(9-12). The alpha and beta chains form an alternating ring which encloses part of the gamma chain. CF(1) is attached to CF(0) by a central stalk formed by the gamma and epsilon chains, while a peripheral stalk is formed by the delta and b chains.

The protein localises to the cell inner membrane. It carries out the reaction ATP + H2O + 4 H(+)(in) = ADP + phosphate + 5 H(+)(out). In terms of biological role, produces ATP from ADP in the presence of a proton gradient across the membrane. The catalytic sites are hosted primarily by the beta subunits. The polypeptide is ATP synthase subunit beta (Idiomarina loihiensis (strain ATCC BAA-735 / DSM 15497 / L2-TR)).